We begin with the raw amino-acid sequence, 404 residues long: Probable protein phosphatase 1N (404 aa).

Residues 59–319 (RFGASAVQGW…DNMTCMVVCF (261 aa)) enclose the PPM-type phosphatase domain. Mn(2+)-binding residues include aspartate 96, glycine 97, aspartate 267, and aspartate 310.

This sequence belongs to the PP2C family. It depends on Mg(2+) as a cofactor. Mn(2+) is required as a cofactor.

It catalyses the reaction O-phospho-L-seryl-[protein] + H2O = L-seryl-[protein] + phosphate. It carries out the reaction O-phospho-L-threonyl-[protein] + H2O = L-threonyl-[protein] + phosphate. This Mus musculus (Mouse) protein is Probable protein phosphatase 1N (Ppm1n).